The chain runs to 297 residues: ER membrane protein complex subunit 2-A (297 aa).

3 TPR repeats span residues 87–120 (HRVK…DPTN), 155–188 (QEAW…NPHN), and 192–225 (YQQF…NNHN).

The protein belongs to the EMC2 family. In terms of assembly, component of the ER membrane protein complex (EMC).

It localises to the endoplasmic reticulum membrane. Its function is as follows. Part of the endoplasmic reticulum membrane protein complex (EMC) that enables the energy-independent insertion into endoplasmic reticulum membranes of newly synthesized membrane proteins. Preferentially accommodates proteins with transmembrane domains that are weakly hydrophobic or contain destabilizing features such as charged and aromatic residues. Involved in the cotranslational insertion of multi-pass membrane proteins in which stop-transfer membrane-anchor sequences become ER membrane spanning helices. It is also required for the post-translational insertion of tail-anchored/TA proteins in endoplasmic reticulum membranes. By mediating the proper cotranslational insertion of N-terminal transmembrane domains in an N-exo topology, with translocated N-terminus in the lumen of the ER, controls the topology of multi-pass membrane proteins. By regulating the insertion of various proteins in membranes, it is indirectly involved in many cellular processes. In Xenopus laevis (African clawed frog), this protein is ER membrane protein complex subunit 2-A (emc2-a).